The following is a 497-amino-acid chain: Glycerol kinase (497 aa).

Thr12 is an ADP binding site. ATP is bound by residues Thr12, Thr13, and Ser14. Residue Thr12 coordinates sn-glycerol 3-phosphate. Residue Arg16 coordinates ADP. Residues Arg82, Glu83, Tyr134, and Asp243 each coordinate sn-glycerol 3-phosphate. Glycerol-binding residues include Arg82, Glu83, Tyr134, Asp243, and Gln244. Positions 265 and 308 each coordinate ADP. Residues Thr265, Gly308, Gln312, and Gly409 each coordinate ATP. The ADP site is built by Gly409 and Asn413.

It belongs to the FGGY kinase family. In terms of assembly, homotetramer and homodimer (in equilibrium).

The enzyme catalyses glycerol + ATP = sn-glycerol 3-phosphate + ADP + H(+). It participates in polyol metabolism; glycerol degradation via glycerol kinase pathway; sn-glycerol 3-phosphate from glycerol: step 1/1. Activated by phosphorylation and inhibited by fructose 1,6-bisphosphate (FBP). Functionally, key enzyme in the regulation of glycerol uptake and metabolism. Catalyzes the phosphorylation of glycerol to yield sn-glycerol 3-phosphate. The chain is Glycerol kinase from Thermoanaerobacter pseudethanolicus (strain ATCC 33223 / 39E) (Clostridium thermohydrosulfuricum).